The chain runs to 518 residues: Phosphoacetylglucosamine mutase 1 (518 aa).

T49 is modified (phosphothreonine). Catalysis depends on S51, which acts as the Phosphoserine intermediate. Mg(2+) is bound by residues S51, D267, D269, and D271. At S51 the chain carries Phosphoserine. Substrate is bound by residues 360–362 (EAN), 486–490 (RASGT), and R495.

The protein belongs to the phosphohexose mutase family. The cofactor is Mg(2+).

Its subcellular location is the cytoplasm. It is found in the nucleus. The enzyme catalyses N-acetyl-alpha-D-glucosamine 1-phosphate = N-acetyl-D-glucosamine 6-phosphate. It participates in nucleotide-sugar biosynthesis; UDP-N-acetyl-alpha-D-glucosamine biosynthesis; N-acetyl-alpha-D-glucosamine 1-phosphate from alpha-D-glucosamine 6-phosphate (route I): step 2/2. In terms of biological role, catalyzes the conversion of GlcNAc-6-P into GlcNAc-1-P during the synthesis of uridine diphosphate/UDP-GlcNAc, which is a biosynthetic precursor of chitin and also supplies the amino sugars for N-linked oligosaccharides of glycoproteins. This chain is Phosphoacetylglucosamine mutase 1, found in Schizosaccharomyces pombe (strain 972 / ATCC 24843) (Fission yeast).